Reading from the N-terminus, the 63-residue chain is Adipokinetic prohormone type 1 (63 aa).

The first 22 residues, 1–22, serve as a signal peptide directing secretion; it reads MVQRCLVVALLVVVVAAALCSA. Residue glutamine 23 is modified to Pyrrolidone carboxylic acid. A Threonine amide modification is found at threonine 32.

Belongs to the AKH/HRTH/RPCH family. In terms of assembly, adipokinetic hormone precursor-related peptide (APRP) can form three type of disulfide-bond dimers: p1 (alpha-alpha), p2 (alpha-beta), and p3 (beta-beta).

The protein resides in the secreted. Functionally, this hormone, released from cells in the corpora cardiaca, causes release of diglycerides from the fat body and stimulation of muscles to use these diglycerides as an energy source during energy-demanding processes. This chain is Adipokinetic prohormone type 1, found in Schistocerca gregaria (Desert locust).